We begin with the raw amino-acid sequence, 331 residues long: Undecaprenyl-phosphate 4-deoxy-4-formamido-L-arabinose transferase (331 aa).

2 helical membrane-spanning segments follow: residues 236–256 (LSIVGGGIASFGILFGLFLIL) and 270–290 (VFPLFSILFIFIGAQFVGLGL).

It belongs to the glycosyltransferase 2 family.

It is found in the cell inner membrane. The catalysed reaction is UDP-4-deoxy-4-formamido-beta-L-arabinose + di-trans,octa-cis-undecaprenyl phosphate = 4-deoxy-4-formamido-alpha-L-arabinopyranosyl di-trans,octa-cis-undecaprenyl phosphate + UDP. Its pathway is glycolipid biosynthesis; 4-amino-4-deoxy-alpha-L-arabinose undecaprenyl phosphate biosynthesis; 4-amino-4-deoxy-alpha-L-arabinose undecaprenyl phosphate from UDP-4-deoxy-4-formamido-beta-L-arabinose and undecaprenyl phosphate: step 1/2. It functions in the pathway bacterial outer membrane biogenesis; lipopolysaccharide biosynthesis. Catalyzes the transfer of 4-deoxy-4-formamido-L-arabinose from UDP to undecaprenyl phosphate. The modified arabinose is attached to lipid A and is required for resistance to polymyxin and cationic antimicrobial peptides. The sequence is that of Undecaprenyl-phosphate 4-deoxy-4-formamido-L-arabinose transferase from Shewanella sediminis (strain HAW-EB3).